A 394-amino-acid polypeptide reads, in one-letter code: Elongation factor Tu 2 (394 aa).

The region spanning 10–204 (KPHVNVGTIG…ALDSYIPQPE (195 aa)) is the tr-type G domain. The tract at residues 19–26 (GHVDHGKT) is G1. 19–26 (GHVDHGKT) contributes to the GTP binding site. Thr-26 contacts Mg(2+). The G2 stretch occupies residues 60–64 (GITIN). A G3 region spans residues 81–84 (DCPG). GTP contacts are provided by residues 81 to 85 (DCPGH) and 136 to 139 (NKCD). A G4 region spans residues 136–139 (NKCD). A G5 region spans residues 174–176 (SAL).

It belongs to the TRAFAC class translation factor GTPase superfamily. Classic translation factor GTPase family. EF-Tu/EF-1A subfamily. As to quaternary structure, monomer.

The protein localises to the cytoplasm. It catalyses the reaction GTP + H2O = GDP + phosphate + H(+). Functionally, GTP hydrolase that promotes the GTP-dependent binding of aminoacyl-tRNA to the A-site of ribosomes during protein biosynthesis. The sequence is that of Elongation factor Tu 2 from Yersinia pestis bv. Antiqua (strain Antiqua).